The chain runs to 490 residues: Aspartyl/glutamyl-tRNA(Asn/Gln) amidotransferase subunit B (490 aa).

This sequence belongs to the GatB/GatE family. GatB subfamily. In terms of assembly, heterotrimer of A, B and C subunits.

It carries out the reaction L-glutamyl-tRNA(Gln) + L-glutamine + ATP + H2O = L-glutaminyl-tRNA(Gln) + L-glutamate + ADP + phosphate + H(+). It catalyses the reaction L-aspartyl-tRNA(Asn) + L-glutamine + ATP + H2O = L-asparaginyl-tRNA(Asn) + L-glutamate + ADP + phosphate + 2 H(+). In terms of biological role, allows the formation of correctly charged Asn-tRNA(Asn) or Gln-tRNA(Gln) through the transamidation of misacylated Asp-tRNA(Asn) or Glu-tRNA(Gln) in organisms which lack either or both of asparaginyl-tRNA or glutaminyl-tRNA synthetases. The reaction takes place in the presence of glutamine and ATP through an activated phospho-Asp-tRNA(Asn) or phospho-Glu-tRNA(Gln). This Methylorubrum extorquens (strain CM4 / NCIMB 13688) (Methylobacterium extorquens) protein is Aspartyl/glutamyl-tRNA(Asn/Gln) amidotransferase subunit B.